The chain runs to 170 residues: MTQKAIYPGTFDPFTNGHLDVLERALNIFQEVVVVIADNSQKQTLFSVEERLSMIREIIEDYPAVSVEVLHDGLLADYARQKGARAIVRGVRQVKDFEYEFQISLLNRHLYPEVTTVFLMPNVKYTYVASSIIKEVAMLGGDVSKFVHPSVLKSLHGKLDESKQHKPNNI.

Residue T10 coordinates substrate. ATP-binding positions include 10 to 11 (TF) and H18. The substrate site is built by K42, L75, and R89. ATP-binding positions include 90–92 (GVR), E100, and 125–131 (YTYVASS).

The protein belongs to the bacterial CoaD family. As to quaternary structure, homohexamer. Mg(2+) serves as cofactor.

It is found in the cytoplasm. The enzyme catalyses (R)-4'-phosphopantetheine + ATP + H(+) = 3'-dephospho-CoA + diphosphate. It functions in the pathway cofactor biosynthesis; coenzyme A biosynthesis; CoA from (R)-pantothenate: step 4/5. Its function is as follows. Reversibly transfers an adenylyl group from ATP to 4'-phosphopantetheine, yielding dephospho-CoA (dPCoA) and pyrophosphate. This Chlorobium limicola (strain DSM 245 / NBRC 103803 / 6330) protein is Phosphopantetheine adenylyltransferase.